Here is a 199-residue protein sequence, read N- to C-terminus: Recombination protein RecR (199 aa).

The C4-type zinc-finger motif lies at cysteine 57–cysteine 72. Residues glycine 81–proline 176 form the Toprim domain.

The protein belongs to the RecR family.

Functionally, may play a role in DNA repair. It seems to be involved in an RecBC-independent recombinational process of DNA repair. It may act with RecF and RecO. This is Recombination protein RecR from Vibrio parahaemolyticus serotype O3:K6 (strain RIMD 2210633).